Consider the following 213-residue polypeptide: Adenylate kinase (213 aa).

14 to 19 (GSGKGT) is an ATP binding site. Residues 34–63 (SSGELFRSAIDSASPLGIKAAEYINQGLLV) form an NMP region. Residues Ser-35, Arg-40, 61-63 (LLV), 89-92 (GFPR), and Gln-96 contribute to the AMP site. An LID region spans residues 129–162 (SRFICPSCKHVYNQNQGLSECPTCQMKLVRRSDD). Residue Arg-130 participates in ATP binding. Residues Cys-133 and Cys-136 each coordinate Zn(2+). 139–140 (VY) serves as a coordination point for ATP. Zn(2+) contacts are provided by Cys-149 and Cys-152. The AMP site is built by Arg-159 and Arg-170. Position 198 (Ala-198) interacts with ATP.

Belongs to the adenylate kinase family. In terms of assembly, monomer.

It localises to the cytoplasm. The enzyme catalyses AMP + ATP = 2 ADP. It participates in purine metabolism; AMP biosynthesis via salvage pathway; AMP from ADP: step 1/1. In terms of biological role, catalyzes the reversible transfer of the terminal phosphate group between ATP and AMP. Plays an important role in cellular energy homeostasis and in adenine nucleotide metabolism. This Chlamydia abortus (strain DSM 27085 / S26/3) (Chlamydophila abortus) protein is Adenylate kinase.